The chain runs to 515 residues: MRAVWALLWALQLGTLVGCALVLGVHHFSGDNLTKQSAIPTKSSKAKPISDQKAAVTSGSTCAVREKARKDGLVLLDGNWYNVEKFVHHHPGGVEVLEQYLGADISFVFRVMHRNPTQIMKYRKPVRAATPEELEALTSRRQEVCLDMMDDFVTNSIDIASPEMLPKPTQFDLKSFEKDFIDLYEEFVAQGYFKPSTTWLLWNTAVLISIIALSVISMKVLPPTSFVLPGALLGLFWHQSGFLMHDAEHHNLAGNERLNDILGWIYGTVFLGVNGAWWREEHREHHAFLNTYDDESGFKDPQMREDVWIQNKKLIPFFGDEIIHFLTNFQHILFLPIIFIVGRVGIVVDSTLTERKFRPWTILGNVCHILLHYAILSQTSRPIPVYIIGSLWQAILSLQLLGNHYVKPWNRLNDATEGNFCVWQILSTQDFACPRWSRWLYGGLNFHYSHHLFPTLSREYFHITSPRIRTLCEKHGLPFIEIAFIDCVVGMVNNFNEVRKDFATKGHGSVAFMYT.

A helical membrane pass occupies residues 3-23; sequence AVWALLWALQLGTLVGCALVL. A Cytochrome b5 heme-binding domain is found at 46-113; it reads AKPISDQKAA…DISFVFRVMH (68 aa). Heme contacts are provided by histidine 90 and histidine 113. The chain crosses the membrane as a helical span at residues 198–218; the sequence is TWLLWNTAVLISIIALSVISM. Positions 245–249 match the Histidine box-1 motif; sequence HDAEH. Residues 258–278 form a helical membrane-spanning segment; that stretch reads LNDILGWIYGTVFLGVNGAWW. The Histidine box-2 motif lies at 281–286; it reads EHREHH. The next 3 helical transmembrane spans lie at 322–342, 359–379, and 382–402; these read IIHF…FIVG, PWTI…LSQT, and PIPV…QLLG. A Histidine box-3 motif is present at residues 447 to 451; the sequence is HYSHH.

It belongs to the fatty acid desaturase type 1 family. Fe(2+) serves as cofactor.

It is found in the membrane. It carries out the reaction a (4E,8E)-4-sphinga-4,8-dienine ceramide + 2 Fe(II)-[cytochrome b5] + O2 + 2 H(+) = an N-acyl-(4E,8E,10E)-sphingatrienine + 2 Fe(III)-[cytochrome b5] + 2 H2O. It participates in lipid metabolism; sphingolipid metabolism. Fatty acid desaturase that catalyzes the introduction of the third double bond at the Delta(10) position in d18:3Delta4,8,10 triunsaturated sphingolipid long fatty acid chains. The cytochrome b5 domain probably acts as the direct electron donor to the active site of the desaturase. This is Sphingolipid 10-desaturase from Thalassiosira pseudonana (Marine diatom).